The primary structure comprises 425 residues: Mothers against decapentaplegic homolog 3 (425 aa).

An N-acetylserine modification is found at Ser-2. The residue at position 8 (Thr-8) is a Phosphothreonine; by CDK2 and CDK4. Residues 10 to 136 form the MH1 domain; sequence PIVKRLLGWK…YQRVETPVLP (127 aa). A Glycyl lysine isopeptide (Lys-Gly) (interchain with G-Cter in ubiquitin) cross-link involves residue Lys-33. Cys-64 contributes to the Zn(2+) binding site. Residue Lys-81 forms a Glycyl lysine isopeptide (Lys-Gly) (interchain with G-Cter in ubiquitin) linkage. Zn(2+) contacts are provided by Cys-109, Cys-121, and His-126. A linker region spans residues 137-231; sequence PVLVPRHTEI…QPVTYCEPAF (95 aa). Polar residues predominate over residues 165–177; sequence NFPAGIEPQSNIP. The tract at residues 165-208 is disordered; it reads NFPAGIEPQSNIPETPPPGYLSEDGETSDHQMNHSMDAGSPNLS. Position 179 is a phosphothreonine; by CDK2, CDK4 and MAPK (Thr-179). Phosphoserine; by GSK3 and MAPK is present on Ser-204. Ser-208 is subject to Phosphoserine; by MAPK. Position 213 is a phosphoserine; by CDK2 and CDK4 (Ser-213). The region spanning 232-425 is the MH2 domain; that stretch reads WCSISYYELN…SPSIRCSSVS (194 aa). Residues 271 to 324 are sufficient for interaction with XPO4; that stretch reads LGLLSNVNRNAAVELTRRHIGRGVRLYYIGGEVFAECLSDSAIFVQSPNCNQRY. Lys-378 is modified (N6-acetyllysine). The residue at position 416 (Ser-416) is a Phosphoserine. At Ser-418 the chain carries Phosphoserine; by CK1. A phosphoserine; by TGFBR1 mark is found at Ser-422, Ser-423, and Ser-425.

Belongs to the dwarfin/SMAD family. As to quaternary structure, monomer; in the absence of TGF-beta. Homooligomer; in the presence of TGF-beta. Heterotrimer; forms a heterotrimer in the presence of TGF-beta consisting of two molecules of C-terminally phosphorylated SMAD2 or SMAD3 and one of SMAD4 to form the transcriptionally active SMAD2/SMAD3-SMAD4 complex. Part of a complex consisting of MAGI2/ARIP1, ACVR2A, ACVR1B and SMAD3. Forms a complex with SMAD2 and TRIM33 upon addition of TGF-beta. Found in a complex composed of SMAD3, RAN and XPO4; within the complex interacts directly with XPO4. Component of the multimeric complex SMAD3/SMAD4/JUN/FOS which forms at the AP1 promoter site; required for synergistic transcriptional activity in response to TGF-beta. Part of a ternary complex composed of SMAD3, ITCH/AIP4 and NEDD9/HEF1; within the complex NEDD9/HEF1 interacts (via N-terminus) with ITCH/AIP4; the complex mediates ubiquitination and proteasomal degradation of NEDD9/HEF1. Interacts with NEDD9; the interaction promotes NEDD9 ubiquitination and proteasomal degradation. Interacts (via an N-terminal domain) with JUN (via its basic DNA binding and leucine zipper domains); this interaction is essential for DNA binding and cooperative transcriptional activity in response to TGF-beta. Identified in a complex that contains at least ZNF451, SMAD2, SMAD3 and SMAD4. Interacts with PPM1A; the interaction dephosphorylates SMAD3 in the C-terminal SXS motif leading to disruption of the SMAD2/3-SMAD4 complex, nuclear export and termination of TGF-beta signaling. Interacts (via MH2 domain) with ZMIZ1 (via SP-RING-type domain); in the TGF-beta signaling pathway increases the activity of the SMAD3/SMAD4 transcriptional complex. Interacts (when phosphorylated) with RNF111; RNF111 acts as an enhancer of the transcriptional responses by mediating ubiquitination and degradation of SMAD3 inhibitors. Interacts (dephosphorylated form via the MH1 and MH2 domains) with RANBP3 (via its C-terminal R domain); the interaction results in the export of dephosphorylated SMAD3 out of the nucleus and termination of the TGF-beta signaling. Interacts (via MH2 domain) with LEMD3; the interaction represses SMAD3 transcriptional activity through preventing the formation of the heteromeric complex with SMAD4 and translocation to the nucleus. Interacts (via the linker region) with EP300 (C-terminal); the interaction promotes SMAD3 acetylation and is enhanced by TGF-beta phosphorylation in the C-terminal of SMAD3. This interaction can be blocked by competitive binding of adenovirus oncoprotein E1A to the same C-terminal site on EP300, which then results in partially inhibited SMAD3/SMAD4 transcriptional activity. Interacts with TGFBR1. Interacts with TGFB1I1. Interacts with PRDM16. Interacts with SNW1. Interacts (via MH2 domain) with ZFYVE9. Interacts with HDAC1. Interacts with TGIF2. Interacts with SKOR1. Interacts with SKOR2. Interacts with DACH1; the interaction inhibits the TGF-beta signaling. Interacts with RBPMS. Interacts (via MH2 domain) with MECOM. Interacts with WWTR1 (via its coiled-coil domain). Interacts with SKI; the interaction represses SMAD3 transcriptional activity. Interacts with MEN1. Interacts with IL1F7. Interaction with CSNK1G2. Interacts with PDPK1 (via PH domain). Interacts with DAB2; the interactions are enhanced upon TGF-beta stimulation. Interacts with USP15. Interacts with PPP5C; the interaction decreases SMAD3 phosphorylation and protein levels. Interacts with LDLRAD4 (via the SMAD interaction motif). Interacts with PMEPA1. Interacts with ZNF451. Interacts with ZFHX3. Interacts weakly with ZNF8. Interacts with STUB1, HSPA1A, HSPA1B, HSP90AA1 and HSP90AB1. Interacts with YAP1 (when phosphorylated at 'Ser-55'). Interacts with MAGI2/ARIP1. Interacts (via MH2 domain) with CITED2 (via C-terminus). Interacts with HGS. Interacts with WWP1. Interacts with TTRAP. Interacts with FOXL2. Interacts with PML. Interacts with NEDD4L; the interaction requires TGF-beta stimulation. Interacts with ZC3H3. Interacts with TGIF. Interacts with CREBBP. Interacts with ATF2. Interacts with NEDD9; the interaction is inhibited by oxidation of NEDD9. Interacts with MTMR4; negatively regulates TGF-beta signaling through SMAD3 dephosphorylation and retention in endosomes. Post-translationally, phosphorylated on serine and threonine residues. Enhanced phosphorylation in the linker region on Thr-179, Ser-204 and Ser-208 on EGF and TGF-beta treatment. Ser-208 is the main site of MAPK-mediated phosphorylation. CDK-mediated phosphorylation occurs in a cell-cycle dependent manner and inhibits both the transcriptional activity and antiproliferative functions of SMAD3. This phosphorylation is inhibited by flavopiridol. Maximum phosphorylation at the G(1)/S junction. Also phosphorylated on serine residues in the C-terminal SXS motif by TGFBR1 and ACVR1. TGFBR1-mediated phosphorylation at these C-terminal sites is required for interaction with SMAD4, nuclear location and transactivational activity, and appears to be a prerequisite for the TGF-beta mediated phosphorylation in the linker region. Dephosphorylated in the C-terminal SXS motif by PPM1A. This dephosphorylation disrupts the interaction with SMAD4, promotes nuclear export and terminates TGF-beta-mediated signaling. Phosphorylation at Ser-418 by CSNK1G2/CK1 promotes ligand-dependent ubiquitination and subsequent proteasome degradation, thus inhibiting SMAD3-mediated TGF-beta responses. Phosphorylated by PDPK1. Acetylation in the nucleus by EP300 in the MH2 domain regulates positively its transcriptional activity and is enhanced by TGF-beta. In terms of processing, poly-ADP-ribosylated by PARP1 and PARP2. ADP-ribosylation negatively regulates SMAD3 transcriptional responses during the course of TGF-beta signaling. Post-translationally, ubiquitinated. Monoubiquitinated, leading to prevent DNA-binding. Deubiquitination by USP15 alleviates inhibition and promotes activation of TGF-beta target genes. Ubiquitinated by RNF111, leading to its degradation: only SMAD3 proteins that are 'in use' are targeted by RNF111, RNF111 playing a key role in activating SMAD3 and regulating its turnover. Undergoes STUB1-mediated ubiquitination and degradation. In terms of tissue distribution, highly expressed in the brain and ovary. Detected in the pyramidal cells of the hippocampus, granule cells of the dentate gyrus, granular cells of the cerebral cortex and the granulosa cells of the ovary.

It localises to the cytoplasm. It is found in the nucleus. Receptor-regulated SMAD (R-SMAD) that is an intracellular signal transducer and transcriptional modulator activated by TGF-beta (transforming growth factor) and activin type 1 receptor kinases. Binds the TRE element in the promoter region of many genes that are regulated by TGF-beta and, on formation of the SMAD3/SMAD4 complex, activates transcription. Also can form a SMAD3/SMAD4/JUN/FOS complex at the AP-1/SMAD site to regulate TGF-beta-mediated transcription. Has an inhibitory effect on wound healing probably by modulating both growth and migration of primary keratinocytes and by altering the TGF-mediated chemotaxis of monocytes. This effect on wound healing appears to be hormone-sensitive. Regulator of chondrogenesis and osteogenesis and inhibits early healing of bone fractures. Positively regulates PDPK1 kinase activity by stimulating its dissociation from the 14-3-3 protein YWHAQ which acts as a negative regulator. This Sus scrofa (Pig) protein is Mothers against decapentaplegic homolog 3 (SMAD3).